The primary structure comprises 206 residues: MEIILKYFPDLTEEQRKQFAALYDLYIDWNAKINVISRKDIENLYEHHVLHSLGIAKVIQFRPGTKVMDLGTGGGFPGIPLAILFPETKFHLVDSIGKKVRVATEVANAIGLKNVTFRHARAEEEKQLFDFVVSRAVMPLADLIKIIKKNISPKQQNAMPNGLICLKGGELEHETMPFKHKTVIHSLSENFEEEFFETKKVVYSQI.

Residues G71, F76, 122–123 (AE), and R135 contribute to the S-adenosyl-L-methionine site.

It belongs to the methyltransferase superfamily. RNA methyltransferase RsmG family.

The protein resides in the cytoplasm. Specifically methylates the N7 position of a guanine in 16S rRNA. This Bacteroides thetaiotaomicron (strain ATCC 29148 / DSM 2079 / JCM 5827 / CCUG 10774 / NCTC 10582 / VPI-5482 / E50) protein is Ribosomal RNA small subunit methyltransferase G.